Consider the following 1229-residue polypeptide: DNA-directed RNA polymerase subunit beta (1229 aa).

Positions 1175–1229 are disordered; the sequence is ESIDEDEQPQGLGAFERGLEEVENGEEDDDKEKFYEDLMDASQEQDESADDDIDE. Composition is skewed to acidic residues over residues 1195 to 1204 and 1211 to 1229; these read EVENGEEDDD and DLMDASQEQDESADDDIDE.

Belongs to the RNA polymerase beta chain family. As to quaternary structure, the RNAP catalytic core consists of 2 alpha, 1 beta, 1 beta' and 1 omega subunit. When a sigma factor is associated with the core the holoenzyme is formed, which can initiate transcription.

The catalysed reaction is RNA(n) + a ribonucleoside 5'-triphosphate = RNA(n+1) + diphosphate. Functionally, DNA-dependent RNA polymerase catalyzes the transcription of DNA into RNA using the four ribonucleoside triphosphates as substrates. This Caldicellulosiruptor saccharolyticus (strain ATCC 43494 / DSM 8903 / Tp8T 6331) protein is DNA-directed RNA polymerase subunit beta.